A 382-amino-acid chain; its full sequence is Protein PEP-RELATED DEVELOPMENT ARRESTED 1 homolog, chloroplastic (382 aa).

A chloroplast-targeting transit peptide spans 1-44 (MAILPLSISHSLTSALSATSSGIGRPVARLLHPRVPSRPTVICL).

The protein localises to the plastid. Its subcellular location is the chloroplast stroma. The protein resides in the chloroplast nucleoid. Plays an essential role in early steps of chloroplast development. May be involved in the redox control of plastid gene expression by maintening the redox state around chloroplast nucleoids. May positively regulate plastid-encoded RNA polymerase (PEP) activity. The sequence is that of Protein PEP-RELATED DEVELOPMENT ARRESTED 1 homolog, chloroplastic from Oryza sativa subsp. japonica (Rice).